The following is a 406-amino-acid chain: Tyrosine--tRNA ligase (406 aa).

Tyrosine 35 serves as a coordination point for L-tyrosine. The 'HIGH' region signature appears at 40–49 (ATSASLHIGH). 2 residues coordinate L-tyrosine: tyrosine 167 and glutamine 171. A 'KMSKS' region motif is present at residues 227 to 231 (KMGKS). Lysine 230 contributes to the ATP binding site. Positions 341-405 (ILLVDLMVLA…IGKKKILRIV (65 aa)) constitute an S4 RNA-binding domain.

The protein belongs to the class-I aminoacyl-tRNA synthetase family. TyrS type 1 subfamily. In terms of assembly, homodimer.

Its subcellular location is the cytoplasm. The catalysed reaction is tRNA(Tyr) + L-tyrosine + ATP = L-tyrosyl-tRNA(Tyr) + AMP + diphosphate + H(+). Functionally, catalyzes the attachment of tyrosine to tRNA(Tyr) in a two-step reaction: tyrosine is first activated by ATP to form Tyr-AMP and then transferred to the acceptor end of tRNA(Tyr). The polypeptide is Tyrosine--tRNA ligase (Borrelia recurrentis (strain A1)).